The chain runs to 331 residues: Myc-associated zinc finger protein (331 aa).

2 disordered regions span residues 46 to 65 (AQSP…APAA) and 108 to 131 (TVDT…SAPA). Residues 117-127 (PPAPPPPPPAV) are compositionally biased toward pro residues. 4 consecutive C2H2-type zinc fingers follow at residues 177–199 (YICA…EAIH), 266–288 (HACE…KLSH), 294–316 (YQCP…VRSH), and 324–331 (YNCSHCGK).

Interacts with BPTF. In terms of tissue distribution, ubiquitously expressed.

The protein localises to the nucleus. Functionally, transcriptional regulator. Acts as a transcriptional activator that binds to purine-rich GAGA sites found in the promoter of many genes including insulin I and II and islet amyloid polypeptide. This chain is Myc-associated zinc finger protein (MAZ), found in Mesocricetus auratus (Golden hamster).